Reading from the N-terminus, the 578-residue chain is Matrix metalloproteinase-17 (578 aa).

Disordered stretches follow at residues 1 to 22 and 107 to 133; these read MGRR…PGPG and PRCS…TKWS. An N-terminal signal peptide occupies residues 1–39; the sequence is MGRRPRGPGSPRGPGPPRPGPGLPPLLLVLALAAHGGCA. Residues 11-22 are compositionally biased toward pro residues; it reads PRGPGPPRPGPG. A propeptide spanning residues 40–124 is cleaved from the precursor; that stretch reads APAPRAEDLS…PPGAQSRRKR (85 aa). Positions 107–114 match the Cysteine switch motif; the sequence is PRCSLPDL. Residue Cys109 coordinates Zn(2+). The N-linked (GlcNAc...) asparagine glycan is linked to Asn136. His247 is a binding site for Zn(2+). The active site involves Glu248. Residues His251 and His257 each coordinate Zn(2+). The disordered stretch occupies residues 301–334; that stretch reads PTAQLDTPEPEEPPLLPEPPNNRSSTPPQKDVPH. N-linked (GlcNAc...) asparagine glycosylation is present at Asn322. Hemopexin repeat units follow at residues 333 to 382, 386 to 432, 436 to 479, and 480 to 527; these read PHRC…WRGL, LDSV…SLPP, DAVF…WRGV, and PSML…WLVC. Cys336 and Cys527 are joined by a disulfide. Residue Ser558 is the site of GPI-anchor amidated serine attachment. The propeptide at 559–578 is removed in mature form; the sequence is DAHRLALPSLLLLTPLLWGL.

Belongs to the peptidase M10A family. Zn(2+) serves as cofactor. Requires Ca(2+) as cofactor. Post-translationally, the precursor is cleaved by a furin endopeptidase. Expressed by monocytes and macrophages.

It localises to the cell membrane. It is found in the secreted. Its subcellular location is the extracellular space. The protein localises to the extracellular matrix. In terms of biological role, endopeptidase that degrades various components of the extracellular matrix, such as fibrin. May be involved in the activation of membrane-bound precursors of growth factors or inflammatory mediators, such as tumor necrosis factor-alpha. May also be involved in tumoral process. Not obvious if able to proteolytically activate progelatinase A. Does not hydrolyze collagen types I, II, III, IV and V, gelatin, fibronectin, laminin, decorin nor alpha1-antitrypsin. The protein is Matrix metalloproteinase-17 (Mmp17) of Mus musculus (Mouse).